The chain runs to 408 residues: Diguanylate cyclase DgcN (408 aa).

The Cytoplasmic portion of the chain corresponds to 1–24; sequence MMDNDNSLNKRPTFKRALRNISMT. A helical membrane pass occupies residues 25–45; the sequence is SIFITMMLIWLLLSVTSVLTL. The Periplasmic segment spans residues 46–52; it reads KQYAQKN. The chain crosses the membrane as a helical span at residues 53-73; that stretch reads LALTAATMTYSLEAAVVFADG. Residues 74–112 are Cytoplasmic-facing; it reads PAATETLAALGQQGQFSTAEVRDKQQNILASWHYTRKDP. A helical membrane pass occupies residues 113-133; the sequence is GDTFSNFISHWLFPAPIIQPI. The Periplasmic portion of the chain corresponds to 134 to 154; sequence RHNGETIGEVRLTARDSSISH. The chain crosses the membrane as a helical span at residues 155-175; the sequence is FIWFSLAVLTGCILLASGIAI. Over 176–408 the chain is Cytoplasmic; sequence TLTRHLHNGL…KHQRAEKLVR (233 aa). The HAMP domain occupies 183–236; the sequence is NGLVEALKNITDVVHDVRSNRNFSRRVSEERIAEFHRFALDFNSLLDEMEEWQL. The 131-residue stretch at 278–408 folds into the GGDEF domain; sequence KTSALLFLDG…KHQRAEKLVR (131 aa). Position 286 (Asp-286) interacts with Mg(2+). Substrate contacts are provided by Asn-294, His-299, and Asp-303. Asp-329 lines the Mg(2+) pocket. Catalysis depends on Asp-329, which acts as the Proton acceptor.

As to quaternary structure, homodimer. Interacts with the cell division proteins FtsZ and ZipA. Requires Mg(2+) as cofactor.

It is found in the cell inner membrane. The catalysed reaction is 2 GTP = 3',3'-c-di-GMP + 2 diphosphate. It participates in purine metabolism; 3',5'-cyclic di-GMP biosynthesis. With respect to regulation, inhibited by YfiR, which prevents relocation to the midcell. A reductive stress signal is required to inactivate YfiR and turn on the DGC activity of DgcN. Bifunctional protein that catalyzes the synthesis of cyclic-di-GMP (c-di-GMP) in response to reductive stress and then dynamically relocates to the division site to arrest cell division in response to envelope stress. In the presence of high intracellular c-di-GMP levels, and in response to envelope stress, interacts with cell division proteins and halts cell division, without disassembling the Z ring, but by blocking its further progress toward cytokinesis. Part of a network that regulates cell motility by altering levels of c-di-GMP. In Escherichia coli (strain K12), this protein is Diguanylate cyclase DgcN.